We begin with the raw amino-acid sequence, 359 residues long: Tryptophan 2,3-dioxygenase (359 aa).

Residues 38–42 (FIIVH) and arginine 109 contribute to the substrate site. Residue histidine 295 coordinates heme. Threonine 309 contacts substrate.

This sequence belongs to the tryptophan 2,3-dioxygenase family. In terms of assembly, homotetramer. It depends on heme as a cofactor.

The catalysed reaction is L-tryptophan + O2 = N-formyl-L-kynurenine. The protein operates within amino-acid degradation; L-tryptophan degradation via kynurenine pathway; L-kynurenine from L-tryptophan: step 1/2. Heme-dependent dioxygenase that catalyzes the oxidative cleavage of the L-tryptophan (L-Trp) pyrrole ring and converts L-tryptophan to N-formyl-L-kynurenine. Catalyzes the oxidative cleavage of the indole moiety. This Bdellovibrio bacteriovorus (strain ATCC 15356 / DSM 50701 / NCIMB 9529 / HD100) protein is Tryptophan 2,3-dioxygenase.